The following is a 671-amino-acid chain: Preterminal protein (671 aa).

A Nuclear localization signal motif is present at residues 380-389; the sequence is RLPVRRRRRR. A disordered region spans residues 386–411; that stretch reads RRRRVPPPPPPPEEEEGEALMEEEIE. Positions 397-411 are enriched in acidic residues; it reads PEEEEGEALMEEEIE. S580 carries the O-(5'-phospho-DNA)-serine modification. Residues 645–671 form a disordered region; the sequence is GADVPLPPLPAGPEPPLPPGARPRHRF. Residues 649-665 show a composition bias toward pro residues; it reads PLPPLPAGPEPPLPPGA.

The protein belongs to the adenoviridae terminal protein family. Heterodimer with the polymerase; this heterodimer binds to bp 9 to 18 of the genome. Interacts with host POU2F1; POU2F1 binds to the auxiliary sequences in the inverted terminal repeats and tethers the pTP-POL heterodimer to the origin DNA thereby participating in the assembly of the pre-initiation complex (POL-TP-DBP-NFIA-POU2F1). Post-translationally, preterminal protein is used to replicate viral genome, upon genomic encapsidation it is processed first into iTP and finally into TP by adenovirus protease.

Its subcellular location is the host nucleus matrix. In terms of biological role, protein covalently bound to the viral DNA that acts as a primer for viral genomic replication by DNA strand displacement. Assembles on the viral origin of replication in an initiation complex with viral polymerase, DBP, host NFIA and host POU2F1/OCT1. During initiation, the polymerase covalently couples the first dCTP with Ser-580 of pTP. The terminal protein stimulates the template activity over 20 fold compared to protein-free templates. Neo-synthesized viral genomes are linked to two preterminal proteins, one for each 5' end. These new genomes are encapsidated in the nucleus, and during capsid maturation by viral protease, preterminal protein is first cleaved into intermediary (iTP), then into mature TP. May play a role in host nuclear matrix localization of genomic DNA. In Human adenovirus C serotype 5 (HAdV-5), this protein is Preterminal protein.